The following is a 119-amino-acid chain: Small ribosomal subunit protein uS13 (119 aa).

Residues 94–113 (GLPVRGQRTKTNARTRKGPR) are compositionally biased toward basic residues. The interval 94 to 119 (GLPVRGQRTKTNARTRKGPRKAIGAK) is disordered.

Belongs to the universal ribosomal protein uS13 family. As to quaternary structure, part of the 30S ribosomal subunit. Forms a loose heterodimer with protein S19. Forms two bridges to the 50S subunit in the 70S ribosome.

Located at the top of the head of the 30S subunit, it contacts several helices of the 16S rRNA. In the 70S ribosome it contacts the 23S rRNA (bridge B1a) and protein L5 of the 50S subunit (bridge B1b), connecting the 2 subunits; these bridges are implicated in subunit movement. Contacts the tRNAs in the A and P-sites. In Nitrosomonas europaea (strain ATCC 19718 / CIP 103999 / KCTC 2705 / NBRC 14298), this protein is Small ribosomal subunit protein uS13.